We begin with the raw amino-acid sequence, 54 residues long: Synaptosomal-associated protein 25 (54 aa).

Belongs to the SNAP-25 family. Part of the SNARE core complex containing SNAP25, VAMP2 and STX1A; this complex binds CPLX1. Found in a complex containing SYT1, SV2B and syntaxin-1. Found in a ternary complex with STX1A and VAMP8. Interacts with HSC70 and with SYT9, forming a complex with DNAJC5. The interaction with SYT9 is inhibited in presence of calcium. Isoform 1 and isoform 2 interact with BLOC1S6. Interacts with CENPF. Interacts with EQTN. Interacts with HGS. Interacts with KCNB1 (via N-terminus); reduces the voltage-dependent potassium channel KCNB1 activity in pancreatic beta cells. Interacts with OTOF. Interacts with RIMS1. Interacts with SNAPIN. Interacts with STXBP6. Interacts with TRIM9. Interacts with ZDHHC13 (via ANK repeats). Interacts with ZDHHC17 (via ANK repeats). Associates with the BLOC-1 complex. Interacts with PLCL1 (via C2 domain). Interacts with PRRT2; this interaction may impair the formation of the SNARE complex. Interacts with alpha-synuclein/SNCA. Interacts with PRPH2. Interacts with ROM1. Interacts with STX3. The N-terminus is blocked.

It is found in the cytoplasm. Its subcellular location is the perinuclear region. It localises to the cell membrane. The protein resides in the synapse. The protein localises to the synaptosome. It is found in the photoreceptor inner segment. Functionally, t-SNARE involved in the molecular regulation of neurotransmitter release. May play an important role in the synaptic function of specific neuronal systems. Associates with proteins involved in vesicle docking and membrane fusion. Regulates plasma membrane recycling through its interaction with CENPF. Modulates the gating characteristics of the delayed rectifier voltage-dependent potassium channel KCNB1 in pancreatic beta cells. This chain is Synaptosomal-associated protein 25 (SNAP25), found in Oryctolagus cuniculus (Rabbit).